The sequence spans 63 residues: MNHPTSTGGTAFNPPRPATMIYLCADCGARNTIQAKEVIRCRECGHRVMYKMRTKRMVQFEAR.

The Zn(2+) site is built by Cys-24, Cys-27, Cys-41, and Cys-44. The C4-type zinc finger occupies 24-44; it reads CADCGARNTIQAKEVIRCREC.

Belongs to the archaeal Rpo12/eukaryotic RPC10 RNA polymerase subunit family. In terms of assembly, component of the RNA polymerase I (Pol I), RNA polymerase II (Pol II) and RNA polymerase III (Pol III) complexes consisting of 14, 12 and 17 subunits, respectively.

It localises to the nucleus. Its function is as follows. DNA-dependent RNA polymerase catalyzes the transcription of DNA into RNA using the four ribonucleoside triphosphates as substrates. Common component of RNA polymerases I, II and III which synthesize ribosomal RNA precursors, mRNA precursors and many functional non-coding RNAs, and a small RNAs, such as 5S rRNA and tRNAs, respectively. The chain is DNA-directed RNA polymerases I, II, and III subunit RPABC4 (rpc10) from Schizosaccharomyces pombe (strain 972 / ATCC 24843) (Fission yeast).